The primary structure comprises 387 residues: Phosphoglycerate kinase (387 aa).

Substrate contacts are provided by residues 21-23 (DLN), R36, and 59-62 (HLGR). K84 carries the N6-acetyllysine modification. Substrate contacts are provided by R113 and R146. Residues K197, E314, and 340 to 343 (GGDT) contribute to the ATP site.

It belongs to the phosphoglycerate kinase family. As to quaternary structure, monomer.

The protein localises to the cytoplasm. It catalyses the reaction (2R)-3-phosphoglycerate + ATP = (2R)-3-phospho-glyceroyl phosphate + ADP. The protein operates within carbohydrate degradation; glycolysis; pyruvate from D-glyceraldehyde 3-phosphate: step 2/5. The sequence is that of Phosphoglycerate kinase (pgk) from Escherichia coli O157:H7.